Consider the following 261-residue polypeptide: MAEAGKPRPLTAFAPPPPLWKHFTQDNLKRLEDIKKEASKGEDGKPRKKKWTPAELRALQLPPELRFLVPPEIPKSGQYSVFGELQSLSTTLPSLQEQGIEQLYPSTPTETDPDKPSQPSRPFNHAYYLLKISKSLLLNFLEFVGILSIAPEQFQSKVEDLRNLFINAHHLLNLYRPHQARESLIMMMEEQLNRSREEIQQMDKMHAEINGFLEQLKAQGIDIDSASKSREDVTAKRATGDQDANNANSSRLVWDILDGTD.

The span at 31-45 (LEDIKKEASKGEDGK) shows a compositional bias: basic and acidic residues. The segment at 31-54 (LEDIKKEASKGEDGKPRKKKWTPA) is disordered.

Belongs to the Mediator complex subunit 7 family. In terms of assembly, component of the Mediator complex.

It is found in the nucleus. Its function is as follows. Component of the Mediator complex, a coactivator involved in the regulated transcription of nearly all RNA polymerase II-dependent genes. Mediator functions as a bridge to convey information from gene-specific regulatory proteins to the basal RNA polymerase II transcription machinery. Mediator is recruited to promoters by direct interactions with regulatory proteins and serves as a scaffold for the assembly of a functional preinitiation complex with RNA polymerase II and the general transcription factors. The chain is Mediator of RNA polymerase II transcription subunit 7 (med7) from Aspergillus fumigatus (strain ATCC MYA-4609 / CBS 101355 / FGSC A1100 / Af293) (Neosartorya fumigata).